Here is a 561-residue protein sequence, read N- to C-terminus: 3beta-hydroxysteroid-dehydrogenase/decarboxylase isoform 3 (561 aa).

K166 provides a ligand contact to NAD(+). The Reticulon domain maps to 379-561 (VADILLWRNE…SDASSKPMFM (183 aa)). Transmembrane regions (helical) follow at residues 392–412 (FVSF…GNTF), 420–440 (LFIF…IFGF), and 504–524 (SLAA…FIYE).

Belongs to the 3-beta-HSD family.

Its subcellular location is the endoplasmic reticulum membrane. It carries out the reaction a 3beta-hydroxysteroid-4alpha-carboxylate + NADP(+) = a 3-oxosteroid + CO2 + NADPH. It catalyses the reaction a 3beta-hydroxysteroid-4alpha-carboxylate + NAD(+) = a 3-oxosteroid + CO2 + NADH. Its pathway is steroid biosynthesis; zymosterol biosynthesis; zymosterol from lanosterol: step 4/6. This chain is 3beta-hydroxysteroid-dehydrogenase/decarboxylase isoform 3 (3BETAHSD/D3), found in Arabidopsis thaliana (Mouse-ear cress).